The following is a 1089-amino-acid chain: SUMO-specific isopeptidase USPL1 (1089 aa).

The segment at 90–128 is disordered; the sequence is LISPDSEDCPTPSKPQKRKRLETNCRNSPLPVHSKKTRS. Positions 215-488 constitute a USP domain; sequence VQWKNTQALC…ETHIVIWERK (274 aa). The active-site Nucleophile is C224. The tract at residues 224 to 483 is SUMO-binding; sequence CWLDCILSAL…EVPASETHIV (260 aa). The Proton acceptor role is filled by H444. Disordered regions lie at residues 687–739, 791–817, 835–868, and 891–928; these read DSQT…KEDQ, ISRRSKRMSRKAKHMEELSPRNSSPPL, LREQEGSRPAPLRHRSPGNESAISPASRGDAAED, and LISSPHREPSLSDHSEPASHCGTPASDQSEPVSHCGSP. Positions 719 to 733 are enriched in polar residues; that stretch reads TASSKTVAARSAQNQ. Over residues 791–803 the composition is skewed to basic residues; that stretch reads ISRRSKRMSRKAK. S894 is subject to Phosphoserine. Residues 895–907 are compositionally biased toward basic and acidic residues; the sequence is PHREPSLSDHSEP.

Belongs to the peptidase C19 family. As to quaternary structure, interacts with ELL.

The protein resides in the nucleus. It is found in the cajal body. Its function is as follows. SUMO-specific isopeptidase involved in protein desumoylation. Specifically binds SUMO proteins with a higher affinity for SUMO2 and SUMO3 which it cleaves more efficiently. Also able to process full-length SUMO proteins to their mature forms. Plays a key role in RNA polymerase-II-mediated snRNA transcription in the Cajal bodies. Is a component of complexes that can bind to U snRNA genes. The polypeptide is SUMO-specific isopeptidase USPL1 (Uspl1) (Mus musculus (Mouse)).